The sequence spans 118 residues: Ribonuclease P protein component (118 aa).

The protein belongs to the RnpA family. In terms of assembly, consists of a catalytic RNA component (M1 or rnpB) and a protein subunit.

It carries out the reaction Endonucleolytic cleavage of RNA, removing 5'-extranucleotides from tRNA precursor.. RNaseP catalyzes the removal of the 5'-leader sequence from pre-tRNA to produce the mature 5'-terminus. It can also cleave other RNA substrates such as 4.5S RNA. The protein component plays an auxiliary but essential role in vivo by binding to the 5'-leader sequence and broadening the substrate specificity of the ribozyme. In Rickettsia peacockii (strain Rustic), this protein is Ribonuclease P protein component.